The chain runs to 410 residues: uncharacterized protein (410 aa).

The span at 178 to 187 shows a compositional bias: polar residues; sequence QKNHRNQLST. Disordered stretches follow at residues 178 to 203 and 236 to 272; these read QKNHRNQLSTQKKQQQALQKAQQEHQ and RAEQAAREQEKREREALAQRQKAEEKRTSKPYQPTVQ. Low complexity predominate over residues 188–198; sequence QKKQQQALQKA. Positions 236–263 are enriched in basic and acidic residues; it reads RAEQAAREQEKREREALAQRQKAEEKRT.

This is an uncharacterized protein from Haemophilus influenzae (strain ATCC 51907 / DSM 11121 / KW20 / Rd).